A 408-amino-acid polypeptide reads, in one-letter code: Heparan-sulfate 6-O-sulfotransferase 1 (408 aa).

Over methionine 8 to lysine 14 the chain is Cytoplasmic. A helical; Signal-anchor for type II membrane protein membrane pass occupies residues phenylalanine 15–proline 35. The Lumenal portion of the chain corresponds to glycine 36–tryptophan 408. Histidine 90–threonine 98 lines the 3'-phosphoadenylyl sulfate pocket. Substrate is bound by residues lysine 120–lysine 121, arginine 137, tryptophan 142, and histidine 147. Histidine 147 (proton acceptor) is an active-site residue. Positions 182 and 190 each coordinate 3'-phosphoadenylyl sulfate. The substrate site is built by histidine 194 and tryptophan 201. Asparagine 261 carries an N-linked (GlcNAc...) asparagine glycan. Methionine 314 to tyrosine 316 serves as a coordination point for 3'-phosphoadenylyl sulfate. A glycan (N-linked (GlcNAc...) asparagine) is linked at asparagine 317. Position 320–321 (arginine 320–alanine 321) interacts with 3'-phosphoadenylyl sulfate. The N-linked (GlcNAc...) asparagine glycan is linked to asparagine 328. Positions alanine 348–glutamate 382 form a coiled coil. The interval leucine 376–proline 396 is disordered.

Belongs to the sulfotransferase 6 family. In terms of processing, N-glycosylated.

It is found in the membrane. It carries out the reaction alpha-D-glucosaminyl-[heparan sulfate](n) + 3'-phosphoadenylyl sulfate = 6-sulfo-alpha-D-glucosaminyl-[heparan sulfate](n) + adenosine 3',5'-bisphosphate + H(+). 6-O-sulfation enzyme which catalyzes the transfer of sulfate from 3'-phosphoadenosine 5'-phosphosulfate (PAPS) to position 6 of the N-sulfoglucosamine residue (GlcNS) of heparan sulfate. May also play a role in limb development. The sequence is that of Heparan-sulfate 6-O-sulfotransferase 1 from Gallus gallus (Chicken).